A 37-amino-acid chain; its full sequence is Large ribosomal subunit protein bL36 (37 aa).

This sequence belongs to the bacterial ribosomal protein bL36 family.

This chain is Large ribosomal subunit protein bL36, found in Leptospira interrogans serogroup Icterohaemorrhagiae serovar Lai (strain 56601).